Reading from the N-terminus, the 359-residue chain is WAT1-related protein At4g28040 (359 aa).

10 helical membrane passes run 10-30, 37-57, 66-86, 103-123, 133-153, 170-190, 204-224, 240-260, 266-286, and 292-312; these read LALV…KAAF, TVFV…ISFI, PSLG…GVTV, ACAM…IVGF, SVAK…MTFL, WLLG…WLIL, TSAC…LALG, SCCI…AWIV, VFSA…GALY, and YLGS…VLWG. The region spanning 18 to 131 is the EamA 1 domain; that stretch reads TSAGVALFTK…GFESIKRRSM (114 aa). Residues 199–310 enclose the EamA 2 domain; that stretch reads PDHLYTSACT…AIILGLYIVL (112 aa).

This sequence belongs to the drug/metabolite transporter (DMT) superfamily. Plant drug/metabolite exporter (P-DME) (TC 2.A.7.4) family.

It is found in the membrane. In Arabidopsis thaliana (Mouse-ear cress), this protein is WAT1-related protein At4g28040.